A 167-amino-acid polypeptide reads, in one-letter code: Peptide deformylase (167 aa).

Fe cation-binding residues include Cys90 and His132. The active site involves Glu133. His136 lines the Fe cation pocket.

Belongs to the polypeptide deformylase family. Fe(2+) serves as cofactor.

The catalysed reaction is N-terminal N-formyl-L-methionyl-[peptide] + H2O = N-terminal L-methionyl-[peptide] + formate. Functionally, removes the formyl group from the N-terminal Met of newly synthesized proteins. Requires at least a dipeptide for an efficient rate of reaction. N-terminal L-methionine is a prerequisite for activity but the enzyme has broad specificity at other positions. This Dehalococcoides mccartyi (strain ATCC BAA-2100 / JCM 16839 / KCTC 5957 / BAV1) protein is Peptide deformylase.